The chain runs to 152 residues: UPF0225 protein YchJ (152 aa).

Belongs to the UPF0225 family.

The protein is UPF0225 protein YchJ of Escherichia coli O7:K1 (strain IAI39 / ExPEC).